An 874-amino-acid polypeptide reads, in one-letter code: Alanine--tRNA ligase (874 aa).

Zn(2+) is bound by residues H564, H568, C665, and H669.

It belongs to the class-II aminoacyl-tRNA synthetase family. The cofactor is Zn(2+).

It is found in the cytoplasm. The catalysed reaction is tRNA(Ala) + L-alanine + ATP = L-alanyl-tRNA(Ala) + AMP + diphosphate. Functionally, catalyzes the attachment of alanine to tRNA(Ala) in a two-step reaction: alanine is first activated by ATP to form Ala-AMP and then transferred to the acceptor end of tRNA(Ala). Also edits incorrectly charged Ser-tRNA(Ala) and Gly-tRNA(Ala) via its editing domain. The protein is Alanine--tRNA ligase of Paraburkholderia xenovorans (strain LB400).